The primary structure comprises 542 residues: Membrane protein insertase YidC (542 aa).

6 consecutive transmembrane segments (helical) span residues 6-26 (NILLIGLLFVSFLLWQQWQTD), 326-346 (LVVDYGFLWWLAIPIHWLLMF), 350-370 (FVGNWGVAIILITLTVRGMLY), 421-441 (GGCLPILLQMPIFIALYWVLL), 458-478 (LSVQDPYYVLPLLMGVSMFLM), and 501-521 (VIFTVFFLWFPAGLVLYWLVG).

Belongs to the OXA1/ALB3/YidC family. Type 1 subfamily. Interacts with the Sec translocase complex via SecD. Specifically interacts with transmembrane segments of nascent integral membrane proteins during membrane integration.

It localises to the cell inner membrane. Required for the insertion and/or proper folding and/or complex formation of integral membrane proteins into the membrane. Involved in integration of membrane proteins that insert both dependently and independently of the Sec translocase complex, as well as at least some lipoproteins. Aids folding of multispanning membrane proteins. The chain is Membrane protein insertase YidC from Shewanella loihica (strain ATCC BAA-1088 / PV-4).